The primary structure comprises 344 residues: Autoinducer 2 import system permease protein LsrC (344 aa).

Helical transmembrane passes span 13 to 33, 38 to 58, 69 to 89, 90 to 110, 114 to 134, 155 to 175, 212 to 232, 251 to 271, and 283 to 303; these read FFAI…YFIL, MIFA…LVML, TVGL…GLAT, AIAF…LLVV, IPAI…MLLW, FIGV…GGWL, LNGM…GFVP, GISL…AFFL, and LPAW…LVLD. Positions 323–344 are disordered; that stretch reads QPGNKGSKQVARFPERKSKEVA. Over residues 335–344 the composition is skewed to basic and acidic residues; sequence FPERKSKEVA.

Belongs to the binding-protein-dependent transport system permease family. AraH/RbsC subfamily. In terms of assembly, the complex is composed of two ATP-binding proteins (LsrA), two transmembrane proteins (LsrC and LsrD) and a solute-binding protein (LsrB).

The protein resides in the cell inner membrane. Part of the ABC transporter complex LsrABCD involved in autoinducer 2 (AI-2) import. Probably responsible for the translocation of the substrate across the membrane. This is Autoinducer 2 import system permease protein LsrC (lsrC) from Klebsiella pneumoniae subsp. pneumoniae (strain ATCC 700721 / MGH 78578).